The sequence spans 108 residues: Parvalbumin beta (108 aa).

N-acetylalanine is present on Ala-1. EF-hand domains lie at 38 to 73 and 77 to 108; these read KSNE…FSAG and LTKT…LVKA. The Ca(2+) site is built by Asp-51, Asp-53, Ser-55, Phe-57, Glu-59, Glu-62, Asp-90, Asp-92, Asp-94, Lys-96, and Glu-101.

This sequence belongs to the parvalbumin family.

Its function is as follows. In muscle, parvalbumin is thought to be involved in relaxation after contraction. It binds two calcium ions. The protein is Parvalbumin beta of Latimeria chalumnae (Coelacanth).